Here is a 490-residue protein sequence, read N- to C-terminus: Cobyric acid synthase (490 aa).

One can recognise a GATase cobBQ-type domain in the interval 252-428; it reads ARRVAVVRLP…WHGAFEGDAL (177 aa). Cys-333 functions as the Nucleophile in the catalytic mechanism. His-420 is an active-site residue.

The protein belongs to the CobB/CobQ family. CobQ subfamily.

It participates in cofactor biosynthesis; adenosylcobalamin biosynthesis. Its function is as follows. Catalyzes amidations at positions B, D, E, and G on adenosylcobyrinic A,C-diamide. NH(2) groups are provided by glutamine, and one molecule of ATP is hydrogenolyzed for each amidation. The polypeptide is Cobyric acid synthase (Mycolicibacterium vanbaalenii (strain DSM 7251 / JCM 13017 / BCRC 16820 / KCTC 9966 / NRRL B-24157 / PYR-1) (Mycobacterium vanbaalenii)).